Reading from the N-terminus, the 37-residue chain is Large ribosomal subunit protein bL36A (37 aa).

This sequence belongs to the bacterial ribosomal protein bL36 family.

The chain is Large ribosomal subunit protein bL36A from Clavibacter sepedonicus (Clavibacter michiganensis subsp. sepedonicus).